A 727-amino-acid chain; its full sequence is C-terminal-binding protein 1 (727 aa).

The THAP-type zinc-finger motif lies at 5–60 (CGFPNCKFRSRYRGLEDNRHFYRIPKRPLILRQRWLTAIGRTEETVVSQLRICSAH). The segment at 64–158 (GEKKEGDIPV…HPPVLPDPQQ (95 aa)) is disordered. Basic and acidic residues predominate over residues 77-94 (TVDKQIKIELPPKESKNS). NAD(+)-binding positions include Tyr-251, 331–336 (LGCGRV), Asp-355, 388–394 (CNLGDET), 415–417 (TSH), Asp-441, and 467–470 (HSAW). Low complexity predominate over residues 587–613 (ANAQRGSPANRSSRSSPSPHTNKSSVS). Disordered regions lie at residues 587 to 629 (ANAQ…SPAA) and 652 to 681 (APNG…GDEN).

It belongs to the D-isomer specific 2-hydroxyacid dehydrogenase family. As to quaternary structure, homodimer.

Its function is as follows. Binds DNA and represses gene expression. Plays a role in regulation of life span, possibly by regulating transcription of genes important for lipid metabolism. This is C-terminal-binding protein 1 from Caenorhabditis elegans.